The sequence spans 300 residues: 4-hydroxy-tetrahydrodipicolinate synthase (300 aa).

Residue Thr-57 coordinates pyruvate. The active-site Proton donor/acceptor is the Tyr-145. The active-site Schiff-base intermediate with substrate is Lys-173. Ile-213 is a pyruvate binding site.

The protein belongs to the DapA family. As to quaternary structure, homotetramer; dimer of dimers.

It is found in the cytoplasm. The enzyme catalyses L-aspartate 4-semialdehyde + pyruvate = (2S,4S)-4-hydroxy-2,3,4,5-tetrahydrodipicolinate + H2O + H(+). It functions in the pathway amino-acid biosynthesis; L-lysine biosynthesis via DAP pathway; (S)-tetrahydrodipicolinate from L-aspartate: step 3/4. Catalyzes the condensation of (S)-aspartate-beta-semialdehyde [(S)-ASA] and pyruvate to 4-hydroxy-tetrahydrodipicolinate (HTPA). This Corynebacterium jeikeium (strain K411) protein is 4-hydroxy-tetrahydrodipicolinate synthase.